A 464-amino-acid chain; its full sequence is GTPase Der (464 aa).

EngA-type G domains are found at residues 5–169 and 190–368; these read PTIA…KQKG and IKVA…RESH. GTP is bound by residues 11–18, 58–62, 121–124, 196–203, 243–247, and 308–311; these read GRPNVGKS, DTGGI, NKAD, GRPNAGKS, DTAGM, and NKFD. Residues 369–461 form the KH-like domain; it reads NLPTTGQLNR…PVIFSARSRV (93 aa).

The protein belongs to the TRAFAC class TrmE-Era-EngA-EngB-Septin-like GTPase superfamily. EngA (Der) GTPase family. Associates with the 50S ribosomal subunit.

In terms of biological role, GTPase that plays an essential role in the late steps of ribosome biogenesis. This chain is GTPase Der, found in Akkermansia muciniphila (strain ATCC BAA-835 / DSM 22959 / JCM 33894 / BCRC 81048 / CCUG 64013 / CIP 107961 / Muc).